A 387-amino-acid chain; its full sequence is MKIFLCLIVVVSLQGVLAYHIEREYAWKNIIYEGINPASYNIENSIPTAFAHDATSKKIFITVPRINPVPITLTEFDTTKHPEGSPSLSKFPGSDKIISVYQPVIDECRRLWIADVGQVEYKEDEKKFPKQNAAIIAYDLTKDNYPEIDRYEIPSIVAGNPLGFGGFAVDVTNPKGGCGKTFIYIANFNDNTLIVYDQEKKDSWKISHGTFKPEHESILTHNGAQHILKLGIFGITLGDLDAEGNRPAYYLGGSSTKLFRVNTKDLKKKDGQIEPTPLGDRGSHSEALALAYDPKTKVIFFTEYNSKRISCWNTQKSLNHDSIDAIYDGPDFIFGTDISVDSDSKLWFFSNGHPPIENLQLTYDKPHIRLISMDTEKSIHGTKCEVK.

An N-terminal signal peptide occupies residues 1 to 18; sequence MKIFLCLIVVVSLQGVLA.

It belongs to the major royal jelly protein family. As to expression, female salivary gland (at protein level).

The protein localises to the secreted. In terms of biological role, probably modulates blood feeding of sand flies on vertebrate species by binding and sequestering different mediators involved in the host response. Binds biogenic amines. Binds octopamine with high affinity. Binds serotonin and dopamine with medium affinity. Poorly binds histamine. Does not bind noradrenaline and adrenaline. The polypeptide is Yellow-related salivary protein ASP2 (Phlebotomus orientalis (Phlebotomine sand fly)).